We begin with the raw amino-acid sequence, 415 residues long: uncharacterized protein (415 aa).

Disordered stretches follow at residues 39-77 (FLPPSSNTTLQKESQEGSPPPTQSQEPLKPMENVSRPIH), 220-247 (AEDKETTSKGSNAKEESKNGLHPKHPLT), and 346-415 (VTLN…NGSK). 3 stretches are compositionally biased toward basic and acidic residues: residues 220 to 238 (AEDKETTSKGSNAKEESKN), 365 to 380 (DVNKDPKLNLCPDKHM), and 400 to 415 (SKTEKIYPEPRRNGSK).

This is an uncharacterized protein from Rattus norvegicus (Rat).